Here is a 66-residue protein sequence, read N- to C-terminus: Protein translocase subunit SecE (66 aa).

The chain crosses the membrane as a helical span at residues 41–61 (LAVMFIVGFVGFVIYILMEIL).

The protein belongs to the SecE/SEC61-gamma family. As to quaternary structure, component of the Sec protein translocase complex. Heterotrimer consisting of SecY (alpha), SecG (beta) and SecE (gamma) subunits. The heterotrimers can form oligomers, although 1 heterotrimer is thought to be able to translocate proteins. Interacts with the ribosome. May interact with SecDF, and other proteins may be involved.

Its subcellular location is the cell membrane. Functionally, essential subunit of the Sec protein translocation channel SecYEG. Clamps together the 2 halves of SecY. May contact the channel plug during translocation. The protein is Protein translocase subunit SecE of Archaeoglobus fulgidus (strain ATCC 49558 / DSM 4304 / JCM 9628 / NBRC 100126 / VC-16).